Reading from the N-terminus, the 601-residue chain is NADPH--cytochrome P450 reductase (601 aa).

Positions 25 to 169 (IVVFYGSQTG…DFVTWREQFW (145 aa)) constitute a Flavodoxin-like domain. FMN contacts are provided by residues 31-36 (SQTGTG), 83-86 (ATYG), 118-127 (LGDKTYEHYN), and Asp153. The region spanning 224 to 425 (KNPFLAPVTV…ICAVLVEYXT (202 aa)) is the FAD-binding FR-type domain. Residues 399–402 (RYYS), 417–419 (CAV), Tyr423, and 427–430 (GVAT) each bind FAD. Residues Thr458, 519-520 (SR), 525-529 (KVYVQ), and Asp562 contribute to the NADP(+) site. Trp600 is a binding site for FAD.

It belongs to the NADPH--cytochrome P450 reductase family. The protein in the N-terminal section; belongs to the flavodoxin family. In the C-terminal section; belongs to the flavoprotein pyridine nucleotide cytochrome reductase family. FAD serves as cofactor. It depends on FMN as a cofactor.

The protein localises to the endoplasmic reticulum membrane. It catalyses the reaction 2 oxidized [cytochrome P450] + NADPH = 2 reduced [cytochrome P450] + NADP(+) + H(+). Its function is as follows. This enzyme is required for electron transfer from NADP to cytochrome P450 in microsomes. It can also provide electron transfer to heme oxygenase and cytochrome B5. The chain is NADPH--cytochrome P450 reductase from Salmo trutta (Brown trout).